A 460-amino-acid polypeptide reads, in one-letter code: 3-ketoacyl-CoA synthase 7 (460 aa).

A helical transmembrane segment spans residues 21–41; the sequence is FHQFLVASACVLIAVFGYYFF. The FAE domain occupies 38–328; that stretch reads YYFFKPRCII…YIISFIQRKW (291 aa). Catalysis depends on residues Cys183, His262, His345, His349, and Asn382.

This sequence belongs to the thiolase-like superfamily. Chalcone/stilbene synthases family. As to expression, expressed in flowers.

Its subcellular location is the membrane. The enzyme catalyses a very-long-chain acyl-CoA + malonyl-CoA + H(+) = a very-long-chain 3-oxoacyl-CoA + CO2 + CoA. Its pathway is lipid metabolism; fatty acid biosynthesis. This is 3-ketoacyl-CoA synthase 7 from Arabidopsis thaliana (Mouse-ear cress).